Reading from the N-terminus, the 173-residue chain is Crossover junction endodeoxyribonuclease RuvC (173 aa).

Active-site residues include aspartate 8, glutamate 67, and aspartate 139. Residues aspartate 8, glutamate 67, and aspartate 139 each contribute to the Mg(2+) site.

This sequence belongs to the RuvC family. In terms of assembly, homodimer which binds Holliday junction (HJ) DNA. The HJ becomes 2-fold symmetrical on binding to RuvC with unstacked arms; it has a different conformation from HJ DNA in complex with RuvA. In the full resolvosome a probable DNA-RuvA(4)-RuvB(12)-RuvC(2) complex forms which resolves the HJ. The cofactor is Mg(2+).

The protein resides in the cytoplasm. It carries out the reaction Endonucleolytic cleavage at a junction such as a reciprocal single-stranded crossover between two homologous DNA duplexes (Holliday junction).. In terms of biological role, the RuvA-RuvB-RuvC complex processes Holliday junction (HJ) DNA during genetic recombination and DNA repair. Endonuclease that resolves HJ intermediates. Cleaves cruciform DNA by making single-stranded nicks across the HJ at symmetrical positions within the homologous arms, yielding a 5'-phosphate and a 3'-hydroxyl group; requires a central core of homology in the junction. The consensus cleavage sequence is 5'-(A/T)TT(C/G)-3'. Cleavage occurs on the 3'-side of the TT dinucleotide at the point of strand exchange. HJ branch migration catalyzed by RuvA-RuvB allows RuvC to scan DNA until it finds its consensus sequence, where it cleaves and resolves the cruciform DNA. In Shewanella sediminis (strain HAW-EB3), this protein is Crossover junction endodeoxyribonuclease RuvC.